Reading from the N-terminus, the 298-residue chain is Zinc-alpha-2-glycoprotein (298 aa).

Residues 1–20 form the signal peptide; it reads MVRMVPVLLSLLLLLGPAVP. Position 21 is a pyrrolidone carboxylic acid (Gln-21). N-linked (GlcNAc...) (complex) asparagine glycosylation occurs at Asn-109. Asn-112 carries an N-linked (GlcNAc...) asparagine glycan. Disulfide bonds link Cys-123–Cys-186 and Cys-225–Cys-280. Asn-128 is a glycosylation site (N-linked (GlcNAc...) (complex) asparagine). One can recognise an Ig-like C1-type domain in the interval 207-292; it reads PSVVVTSHQA…QHSSLAQPLV (86 aa). Asn-259 carries N-linked (GlcNAc...) asparagine glycosylation.

The protein belongs to the MHC class I family. Interacts with PIP. N-glycosylated. N-glycan at Asn-128: Hex5HexNAc4. As to expression, blood plasma, seminal plasma, urine, saliva, sweat, epithelial cells of various human glands, liver.

The protein localises to the secreted. Stimulates lipid degradation in adipocytes and causes the extensive fat losses associated with some advanced cancers. May bind polyunsaturated fatty acids. In Homo sapiens (Human), this protein is Zinc-alpha-2-glycoprotein (AZGP1).